Reading from the N-terminus, the 77-residue chain is Secapin-2 (77 aa).

A signal peptide spans 1–32 (MKNYSKNATYLITVLLFSFVTMLLIIPSKCEA). The propeptide occupies 33 to 52 (VSNDMQPLEARTADLVQQPR). A disulfide bridge links C61 with C72. At P77 the chain carries Proline amide.

Belongs to the secapin family. In terms of tissue distribution, expressed by the venom gland.

It localises to the secreted. Its function is as follows. Serine protease inhibitor which exhibits antifibrinolytic, antielastolytic and antimicrobial activities. Displays antimicrobial activity against bacteria and fungi. Likely functions in the innate immune response to microbial infection and possibly in the venom, as an antifibrinolytic agent. Induces hyperalgesia and edema mediated by leukotrienes when injected into mice. Does not induce hemolytic activity, mast cell degranulation, or chemotactic activity for polymorphonucleated leukocytes (PMNL). The chain is Secapin-2 from Apis mellifera (Honeybee).